We begin with the raw amino-acid sequence, 323 residues long: Probable proline iminopeptidase (323 aa).

Positions 37 to 301 (VVLHGGPGSR…VIVDEAGHDA (265 aa)) constitute an AB hydrolase-1 domain. Serine 114 acts as the Nucleophile in catalysis. Residue aspartate 271 is part of the active site. Histidine 299 serves as the catalytic Proton donor.

Belongs to the peptidase S33 family.

It is found in the cytoplasm. The enzyme catalyses Release of N-terminal proline from a peptide.. Specifically catalyzes the removal of N-terminal proline residues from peptides. In Streptomyces coelicolor (strain ATCC BAA-471 / A3(2) / M145), this protein is Probable proline iminopeptidase.